A 735-amino-acid chain; its full sequence is Two pore calcium channel protein 1B (735 aa).

Residues 1–76 (MEEYLLPGES…ELYFMFTRFD (76 aa)) are Cytoplasmic-facing. A helical membrane pass occupies residues 77-97 (FLWSLNYLALVVLNFFEKPLW). Over 98-125 (CSKHLAESCNNRDYYYLGELPFLTGAES) the chain is Extracellular. The chain crosses the membrane as a helical span at residues 126 to 146 (LIFEGVTLLLLIIHILFPISY). The Cytoplasmic segment spans residues 147–161 (EGFNLYWRSLLNRLK). Residues 162 to 182 (VILLLILVADIVVYILLPADF) form a helical membrane-spanning segment. Position 183 (Tyr183) is a topological domain, extracellular. The helical; Voltage-sensor transmembrane segment at 184–202 (YLPFRIAPYLRVVFFILNI) threads the bilayer. Residues 203-208 (RELRDS) are Cytoplasmic-facing. Residues 209–229 (FFILAGMLGTYLNVVALSALF) traverse the membrane as a helical segment. The Extracellular portion of the chain corresponds to 230–248 (LLFSSWLAYVFFEDTRQGK). An intramembrane region (pore-forming) is located at residues 249–263 (TTFTSYGTTLYQMFV). Over 264 to 286 (LFTTSNNPDVWIPAYKDSRWYCL) the chain is Extracellular. The helical transmembrane segment at 287–307 (FFVLYVLLGVYFVTNLILAVV) threads the bilayer. Residues 308 to 431 (YDSFKSELVK…ASEKLRGFIR (124 aa)) lie on the Cytoplasmic side of the membrane. EF-hand domains follow at residues 325-360 (LRLR…LNKY) and 366-401 (ISGD…IGLR). The chain crosses the membrane as a helical span at residues 432-452 (GATFEYIIVFVLLVNLVAVII). Topologically, residues 453–470 (ETTLDIQNNSGQTFWQKV) are extracellular. N-linked (GlcNAc...) asparagine glycosylation occurs at Asn460. A helical transmembrane segment spans residues 471–491 (EFTFGWLYVIEMALKVYTYGF). The Cytoplasmic portion of the chain corresponds to 492 to 501 (ENYWRDGQNR). Residues 502–522 (FDFIVTWVIVIGETTTFVAPD) form a helical membrane-spanning segment. Residues 523–531 (DLTFLSNGE) lie on the Extracellular side of the membrane. Residues 532–549 (WIRYLLIARMLRLIRLLM) form a helical; Voltage-sensor membrane-spanning segment. Residues 550-560 (HVERYRAFVAT) are Cytoplasmic-facing. The helical transmembrane segment at 561-581 (FLTLIPSLMPYLGTIFCILCF) threads the bilayer. Residues 582–618 (YCSLGLQIFGGIVNTGNPNLAQTDLAGNDYLLFNFND) lie on the Extracellular side of the membrane. The pore-forming intramembrane region spans 619–633 (YPNGMVTLFNILVMG). The Extracellular portion of the chain corresponds to 634–654 (NWQVWMQSYKELTGTSWTYAY). A helical transmembrane segment spans residues 655 to 675 (FVSFYLISVLWLLNLIVAFVL). At 676 to 735 (EAFQAEMDLEASARCVDGDDKEAKRERRRNVGTKTRSQRVDFLLHHMLRSELTECSNDNP) the chain is on the cytoplasmic side.

It belongs to the calcium channel alpha-1 subunit (TC 1.A.1.11) family. Two pore calcium channel subfamily. As to quaternary structure, homodimer.

The protein resides in the membrane. With respect to regulation, inhibited by Al(3+), La(3+) and Gd(3+). Up-regulated by H(2)O(2), cryptogein, salicylic acid (SA) and cold shock. Its function is as follows. Functions as a voltage-gated inward-rectifying Ca(2+) channel (VDCC) across the plasma membrane that mediates sucrose-induced Ca(2+) influx in autotrophically grown leaf cells. Acts as the major ROS-responsive Ca(2+) channel and is the possible target of Al-dependent inhibition. Plays a regulatory role in defense responses. The polypeptide is Two pore calcium channel protein 1B (TPC1B) (Nicotiana tabacum (Common tobacco)).